The following is a 396-amino-acid chain: G-protein coupled receptor 84 (396 aa).

Residues 1–21 (MWNSSDANFSCYHESVLGYRY) are Extracellular-facing. N-linked (GlcNAc...) asparagine glycans are attached at residues asparagine 3 and asparagine 8. Residues 22–42 (FAVIWGVAVAVTGTVGNVLTL) traverse the membrane as a helical segment. The Cytoplasmic portion of the chain corresponds to 43–57 (LALAIRPKLRTRFNL). Residues 58 to 78 (LIANLTLADLLYCTLLQPFSV) form a helical membrane-spanning segment. Residues 79–94 (DTYLHLHWRTGAVFCR) are Extracellular-facing. The helical transmembrane segment at 95-115 (IFGLLLFTSNSVSILTLCLIA) threads the bilayer. Residues 116-135 (LGRYLLIAHPKLFPQVFSAK) lie on the Cytoplasmic side of the membrane. The helical transmembrane segment at 136–156 (GIVLALVGSWVVGVTSFAPLW) threads the bilayer. The Extracellular portion of the chain corresponds to 157 to 180 (NVFVLVPVVCTCSFDRMRGRPYTT). Residues 181–201 (ILMGIYFVLGLSSVGVFYCLI) traverse the membrane as a helical segment. Residues 202–320 (HRQVKRAARA…PSEFGKVTRM (119 aa)) lie on the Cytoplasmic side of the membrane. Phosphoserine occurs at positions 221 and 224. Positions 241–310 (LDSGVASRGP…TAGARRATDA (70 aa)) are disordered. Over residues 253-269 (GISSEPVSAATTQTLEG) the composition is skewed to polar residues. 2 positions are modified to phosphothreonine: threonine 263 and threonine 264. The segment covering 290–308 (SLPEVHRKPRETAGARRAT) has biased composition (basic and acidic residues). A helical transmembrane segment spans residues 321–341 (CFAVFLCFALSYIPFLLLNIL). The Extracellular segment spans residues 342–352 (DARGRAPRVVH). A helical transmembrane segment spans residues 353–373 (MVAANLTWLNSCINPVLYAAM). At 374 to 396 (NRQFRHAYGSILKRGPQSFRRFH) the chain is on the cytoplasmic side.

The protein belongs to the G-protein coupled receptor 1 family. As to quaternary structure, interacts with ARRB2 and ARR3. In terms of processing, phosphorylated by a subset of GPR84-activating ligands. Constitutively phosphorylated at Ser-221 and Ser-224 in the absence of 2-HTP. By contrast, Thr-263 and Thr-264 are phosphorylated only following prior cell treatment with 2-HTP. Expressed predominantly in hematopoietic tissues. Expressed mainly in the bone marrow with transcripts also detected in spleen, the lymph node, liver and the lung.

It is found in the cell membrane. G protein-coupled receptor that responds endogenously to dietary fatty acids or nutrient, specifically medium-chain free fatty acid (FFA) with carbon chain lengths of C9 to C14. Capric acid (C10:0), undecanoic acid (C11:0) and lauric acid (C12:0) are the most potent agonists. In immune cells, functions as a pro-inflammatory receptor via 6-OAU and promotes the expression of pro-inflammatory mediators such as TNFalpha, IL-6 and IL-12B as well as stimulating chemotactic responses through activation of signaling mediators AKT, ERK and NF-kappa-B (by sim). In addition, triggers increased bacterial adhesion and phagocytosis in macrophages and regulates pro-inflammatory function via enhancing NLRP3 inflammasome activation. Also plays an important role in inflammation by modulating neutrophil functions. Mechanistically, promotes neutrophil chemotaxis, reactive oxygen species (ROS) production and degranulation via LYN-AKT/ERK pathway. To regulate ROS production, communicates with the two formyl peptide receptors FPR2 and FPR1 to control the NADPH oxidase activity in neutrophils. This Mus musculus (Mouse) protein is G-protein coupled receptor 84 (Gpr84).